A 232-amino-acid chain; its full sequence is MLTFLAIIVVAYLIGSIPTSIIAGKLLKGIDIREFGSGNAGGTNAFRVLGWKAGLVVTLIDIAKGTIAAVPVVGFFKAHPLGAFPDMNEIALSLIAGMAAVIGHVFTVFAGFKGGKGVSTAAGMLIGIAPVSMLMVIGIFLLAVTISRYVSVGSILAAIAFPLIIAIRKYVFDLGSGLDYRFFDHWFVHDSLDYHLLIFGGIVAVAIIYTHRANIKRLFSGTENRLSFGRKN.

6 consecutive transmembrane segments (helical) span residues 4 to 24 (FLAI…IIAG), 56 to 76 (VVTL…VGFF), 90 to 110 (IALS…TVFA), 124 to 144 (MLIG…LLAV), 152 to 172 (VGSI…KYVF), and 191 to 211 (SLDY…IYTH).

It belongs to the PlsY family. Probably interacts with PlsX.

The protein localises to the cell inner membrane. It catalyses the reaction an acyl phosphate + sn-glycerol 3-phosphate = a 1-acyl-sn-glycero-3-phosphate + phosphate. Its pathway is lipid metabolism; phospholipid metabolism. Its function is as follows. Catalyzes the transfer of an acyl group from acyl-phosphate (acyl-PO(4)) to glycerol-3-phosphate (G3P) to form lysophosphatidic acid (LPA). This enzyme utilizes acyl-phosphate as fatty acyl donor, but not acyl-CoA or acyl-ACP. This chain is Glycerol-3-phosphate acyltransferase, found in Chlorobaculum tepidum (strain ATCC 49652 / DSM 12025 / NBRC 103806 / TLS) (Chlorobium tepidum).